The chain runs to 258 residues: Phosphate import ATP-binding protein PstB (258 aa).

Residues Ile-5–Lys-247 form the ABC transporter domain. An ATP-binding site is contributed by Gly-37–Ser-44.

Belongs to the ABC transporter superfamily. Phosphate importer (TC 3.A.1.7) family. As to quaternary structure, the complex is composed of two ATP-binding proteins (PstB), two transmembrane proteins (PstC and PstA) and a solute-binding protein (PstS).

It is found in the cell membrane. It catalyses the reaction phosphate(out) + ATP + H2O = ADP + 2 phosphate(in) + H(+). Its function is as follows. Part of the ABC transporter complex PstSACB involved in phosphate import. Responsible for energy coupling to the transport system. The chain is Phosphate import ATP-binding protein PstB from Frankia casuarinae (strain DSM 45818 / CECT 9043 / HFP020203 / CcI3).